The sequence spans 445 residues: Tubulin beta chain (445 aa).

The GTP site is built by Q11, E69, S138, G142, T143, G144, N204, and N226. E69 contributes to the Mg(2+) binding site.

It belongs to the tubulin family. As to quaternary structure, dimer of alpha and beta chains. A typical microtubule is a hollow water-filled tube with an outer diameter of 25 nm and an inner diameter of 15 nM. Alpha-beta heterodimers associate head-to-tail to form protofilaments running lengthwise along the microtubule wall with the beta-tubulin subunit facing the microtubule plus end conferring a structural polarity. Microtubules usually have 13 protofilaments but different protofilament numbers can be found in some organisms and specialized cells. The cofactor is Mg(2+).

It is found in the cytoplasm. Its subcellular location is the cytoskeleton. Tubulin is the major constituent of microtubules, a cylinder consisting of laterally associated linear protofilaments composed of alpha- and beta-tubulin heterodimers. Microtubules grow by the addition of GTP-tubulin dimers to the microtubule end, where a stabilizing cap forms. Below the cap, tubulin dimers are in GDP-bound state, owing to GTPase activity of alpha-tubulin. The polypeptide is Tubulin beta chain (Coprinopsis cinerea (strain Okayama-7 / 130 / ATCC MYA-4618 / FGSC 9003) (Inky cap fungus)).